The primary structure comprises 489 residues: MITIPYLTAVSTYFSYGLLFAFGQLRDYSRLIFDWWRTNNLQGYAPICLAHEDFYIRRLYHRIQDCFGRPISSAPDAWIDVVERVSDDNNKTLKRTTKTSRCLNLGSYNYLGFGSFDEYCTPRVIESLKKFSASTCSSRVDAGTTSVHAELEDCVAKYVGQPAAVIFGMGYATNSAIIPVLIGKGGLIISDSLNHTSIVNGARGSGATIRVFQHNTPGHLEKVLKEQIAEGQPRTHRPWKKIIVVVEGIYSMEGEICHLPEIVSICKKYKAYVYLDEAHSIGAIGKTGRGVCELLGVDTSDVDIMMGTFTKSFGSCGGYIAGSKDLIQYLKHQCPAHLYATSISTPSATQIISAIKVILGEDGSNRGAQKLARIRENSNFFRAELQKMGFEVLGDNDSPVMPIMLYNPAKIPAFSRECLRENLAVVVVGFPATPLLLARARICISASHSREDLIKALQVISKAGDLTGIKYFPAAPKKQEVEKNGIKLD.

The chain crosses the membrane as a helical span at residues 2-22; sequence ITIPYLTAVSTYFSYGLLFAF. Lysine 311 is modified (N6-(pyridoxal phosphate)lysine).

It belongs to the class-II pyridoxal-phosphate-dependent aminotransferase family. In terms of assembly, heterodimer with LCB1. Component of the serine palmitoyltransferase (SPT) complex, composed of LCB1 and LCB2 (LCB2a or LCB2b). The cofactor is pyridoxal 5'-phosphate. As to expression, ubiquitous with the highest expression in flowers.

It is found in the endoplasmic reticulum membrane. It catalyses the reaction L-serine + hexadecanoyl-CoA + H(+) = 3-oxosphinganine + CO2 + CoA. It functions in the pathway lipid metabolism; sphingolipid metabolism. In terms of biological role, serine palmitoyltransferase (SPT). The heterodimer formed with LCB1 constitutes the catalytic core. Plays an important role during male gametogenesis and embryogenesis. The chain is Long chain base biosynthesis protein 2b (LCB2b) from Arabidopsis thaliana (Mouse-ear cress).